Consider the following 398-residue polypeptide: Elongation factor Tu (398 aa).

One can recognise a tr-type G domain in the interval 10 to 207 (KIHLNVGTIG…ILDKNIPVPN (198 aa)). The segment at 19 to 26 (GHVDHGKT) is G1. Residue 19–26 (GHVDHGKT) coordinates GTP. Thr-26 contributes to the Mg(2+) binding site. The tract at residues 60-64 (GITIS) is G2. The tract at residues 81 to 84 (DCPG) is G3. Residues 81–85 (DCPGH) and 136–139 (NKAD) contribute to the GTP site. The segment at 136 to 139 (NKAD) is G4. The tract at residues 174 to 176 (SAL) is G5.

Belongs to the TRAFAC class translation factor GTPase superfamily. Classic translation factor GTPase family. EF-Tu/EF-1A subfamily. Monomer.

It is found in the cytoplasm. The catalysed reaction is GTP + H2O = GDP + phosphate + H(+). GTP hydrolase that promotes the GTP-dependent binding of aminoacyl-tRNA to the A-site of ribosomes during protein biosynthesis. The protein is Elongation factor Tu of Carsonella ruddii (strain PV).